The sequence spans 902 residues: Glutamate receptor 4 (902 aa).

The N-terminal stretch at 1–20 (MRIICRQIVLLFSGFWGLAM) is a signal peptide. The Extracellular segment spans residues 22–544 (AFPSSVQIGG…GVFSFLDPLA (523 aa)). 6 N-linked (GlcNAc...) asparagine glycosylation sites follow: Asn-52, Asn-56, Asn-258, Asn-371, Asn-407, and Asn-414. An intrachain disulfide couples Cys-84 to Cys-331. Pro-500, Thr-502, and Arg-507 together coordinate L-glutamate. Residues 545–565 (YEIWMCIVFAYIGVSVVLFLV) traverse the membrane as a helical segment. Over 566 to 592 (SRFSPYEWHTEEPEDGKEGPSDQPPNE) the chain is Cytoplasmic. The segment at residues 593 to 608 (FGIFNSLWFSLGAFMQ) is an intramembrane region (helical; Pore-forming). An intramembrane segment occupies 609-611 (QGC). The S-palmitoyl cysteine moiety is linked to residue Cys-611. Over 612 to 617 (DISPRS) the chain is Cytoplasmic. A helical transmembrane segment spans residues 618 to 638 (LSGRIVGGVWWFFTLIIISSY). Residues 639-813 (TANLAAFLTV…DKTSALSLSN (175 aa)) are Extracellular-facing. Residues Ser-676, Thr-677, and Glu-727 each contribute to the L-glutamate site. Residues Cys-740 and Cys-795 are joined by a disulfide bond. A helical transmembrane segment spans residues 814 to 834 (VAGVFYILVGGLGLAMLVALI). At 835–902 (EFCYKSRAEA…GLAVIASDLP (68 aa)) the chain is on the cytoplasmic side. Cys-837 carries S-palmitoyl cysteine lipidation. A Phosphoserine modification is found at Ser-862.

The protein belongs to the glutamate-gated ion channel (TC 1.A.10.1) family. GRIA4 subfamily. In terms of assembly, homotetramer or heterotetramer of pore-forming glutamate receptor subunits. Tetramers may be formed by the dimerization of dimers. Interacts with EPB41L1 via its C-terminus. Isoform 3 interacts with PICK1. Found in a complex with GRIA1, GRIA2, GRIA3, CNIH2, CNIH3, CACNG2, CACNG3, CACNG4, CACNG5, CACNG7 and CACNG8. Interacts with CACNG5 and PRKCG. Found in a complex with GRIA1, GRIA2, GRIA3, DLG4, CACNG8 and CNIH2. In terms of processing, palmitoylated. Depalmitoylated upon L-glutamate stimulation. ZDHHC3/GODZ specifically palmitoylates Cys-611, which leads to Golgi retention and decreased cell surface expression. In contrast, Cys-837 palmitoylation does not affect cell surface expression but regulates stimulation-dependent endocytosis. Phosphorylated at Ser-862 by PRKCG; phosphorylation increases plasma membrane-associated GRI4 expression.

It is found in the cell membrane. It localises to the postsynaptic cell membrane. Its subcellular location is the cell projection. The protein resides in the dendrite. It carries out the reaction Ca(2+)(in) = Ca(2+)(out). The enzyme catalyses Na(+)(in) = Na(+)(out). The catalysed reaction is Mg(2+)(in) = Mg(2+)(out). Functionally, ionotropic glutamate receptor that functions as a ligand-gated cation channel, gated by L-glutamate and glutamatergic agonists such as alpha-amino-3-hydroxy-5-methyl-4-isoxazolepropionic acid (AMPA), quisqualic acid, and kainic acid. L-glutamate acts as an excitatory neurotransmitter at many synapses in the central nervous system and plays an important role in fast excitatory synaptic transmission. Binding of the excitatory neurotransmitter L-glutamate induces a conformation change, leading to the opening of the cation channel, and thereby converts the chemical signal to an electrical impulse upon entry of monovalent and divalent cations such as sodium and calcium. The receptor then desensitizes rapidly and enters a transient inactive state, characterized by the presence of bound agonist. In the presence of CACNG8, shows resensitization which is characterized by a delayed accumulation of current flux upon continued application of L-glutamate. The sequence is that of Glutamate receptor 4 from Mus musculus (Mouse).